A 913-amino-acid chain; its full sequence is Protein translocase subunit SecA (913 aa).

ATP-binding positions include glutamine 87, 105–109 (GEGKT), and aspartate 512. Zn(2+) contacts are provided by cysteine 897, cysteine 899, cysteine 908, and histidine 909.

The protein belongs to the SecA family. In terms of assembly, monomer and homodimer. Part of the essential Sec protein translocation apparatus which comprises SecA, SecYEG and auxiliary proteins SecDF-YajC and YidC. The cofactor is Zn(2+).

The protein localises to the cell inner membrane. Its subcellular location is the cytoplasm. The catalysed reaction is ATP + H2O + cellular proteinSide 1 = ADP + phosphate + cellular proteinSide 2.. Its function is as follows. Part of the Sec protein translocase complex. Interacts with the SecYEG preprotein conducting channel. Has a central role in coupling the hydrolysis of ATP to the transfer of proteins into and across the cell membrane, serving both as a receptor for the preprotein-SecB complex and as an ATP-driven molecular motor driving the stepwise translocation of polypeptide chains across the membrane. This chain is Protein translocase subunit SecA, found in Pseudomonas fluorescens (strain ATCC BAA-477 / NRRL B-23932 / Pf-5).